The primary structure comprises 562 residues: Dihydroxy-acid dehydratase (562 aa).

Aspartate 80 contacts Mg(2+). Cysteine 121 lines the [2Fe-2S] cluster pocket. Positions 122 and 123 each coordinate Mg(2+). Lysine 123 carries the post-translational modification N6-carboxylysine. Cysteine 194 serves as a coordination point for [2Fe-2S] cluster. A Mg(2+)-binding site is contributed by glutamate 446. Serine 472 functions as the Proton acceptor in the catalytic mechanism.

The protein belongs to the IlvD/Edd family. In terms of assembly, homodimer. It depends on [2Fe-2S] cluster as a cofactor. Mg(2+) serves as cofactor.

The catalysed reaction is (2R)-2,3-dihydroxy-3-methylbutanoate = 3-methyl-2-oxobutanoate + H2O. It catalyses the reaction (2R,3R)-2,3-dihydroxy-3-methylpentanoate = (S)-3-methyl-2-oxopentanoate + H2O. The protein operates within amino-acid biosynthesis; L-isoleucine biosynthesis; L-isoleucine from 2-oxobutanoate: step 3/4. Its pathway is amino-acid biosynthesis; L-valine biosynthesis; L-valine from pyruvate: step 3/4. Functionally, functions in the biosynthesis of branched-chain amino acids. Catalyzes the dehydration of (2R,3R)-2,3-dihydroxy-3-methylpentanoate (2,3-dihydroxy-3-methylvalerate) into 2-oxo-3-methylpentanoate (2-oxo-3-methylvalerate) and of (2R)-2,3-dihydroxy-3-methylbutanoate (2,3-dihydroxyisovalerate) into 2-oxo-3-methylbutanoate (2-oxoisovalerate), the penultimate precursor to L-isoleucine and L-valine, respectively. The protein is Dihydroxy-acid dehydratase of Staphylococcus aureus (strain COL).